The primary structure comprises 195 residues: 3-isopropylmalate dehydratase small subunit (195 aa).

The protein belongs to the LeuD family. LeuD type 1 subfamily. In terms of assembly, heterodimer of LeuC and LeuD.

The catalysed reaction is (2R,3S)-3-isopropylmalate = (2S)-2-isopropylmalate. Its pathway is amino-acid biosynthesis; L-leucine biosynthesis; L-leucine from 3-methyl-2-oxobutanoate: step 2/4. Catalyzes the isomerization between 2-isopropylmalate and 3-isopropylmalate, via the formation of 2-isopropylmaleate. The protein is 3-isopropylmalate dehydratase small subunit of Salinispora tropica (strain ATCC BAA-916 / DSM 44818 / JCM 13857 / NBRC 105044 / CNB-440).